The chain runs to 189 residues: Ion-translocating oxidoreductase complex subunit B (189 aa).

Residues 1-26 (MSAIVIAIVVLTILALVFGVLLGFAA) form a hydrophobic region. A 4Fe-4S domain is found at 32 to 90 (EGNPLTDQIEALLPQTQCGQCGYPGCRPYAEAIANGDKVNKCPPGGAATMEKLADLMGV). 12 residues coordinate [4Fe-4S] cluster: cysteine 49, cysteine 52, cysteine 57, cysteine 73, cysteine 114, cysteine 117, cysteine 120, cysteine 124, cysteine 144, cysteine 147, cysteine 150, and cysteine 154. 2 consecutive 4Fe-4S ferredoxin-type domains span residues 105-134 (KVAY…GSGK) and 135-164 (LMHT…MLPV).

The protein belongs to the 4Fe4S bacterial-type ferredoxin family. RnfB subfamily. In terms of assembly, the complex is composed of six subunits: RnfA, RnfB, RnfC, RnfD, RnfE and RnfG. [4Fe-4S] cluster is required as a cofactor.

It is found in the cell inner membrane. Part of a membrane-bound complex that couples electron transfer with translocation of ions across the membrane. This chain is Ion-translocating oxidoreductase complex subunit B, found in Shewanella pealeana (strain ATCC 700345 / ANG-SQ1).